The sequence spans 436 residues: Elongation factor 1-alpha (436 aa).

The tr-type G domain occupies 8–232 (KPHLNMIVTG…DDFKMAEKPV (225 aa)). The tract at residues 17 to 24 (GHIDNGKS) is G1. A GTP-binding site is contributed by 17 to 24 (GHIDNGKS). Serine 24 serves as a coordination point for Mg(2+). Residues 74-78 (GITID) are G2. A G3 region spans residues 95–98 (DAPG). GTP-binding positions include 95–99 (DAPGH) and 157–160 (NKMD). The G4 stretch occupies residues 157–160 (NKMD). Residues 196 to 198 (SGW) are G5.

The protein belongs to the TRAFAC class translation factor GTPase superfamily. Classic translation factor GTPase family. EF-Tu/EF-1A subfamily.

The protein resides in the cytoplasm. The catalysed reaction is GTP + H2O = GDP + phosphate + H(+). GTP hydrolase that promotes the GTP-dependent binding of aminoacyl-tRNA to the A-site of ribosomes during protein biosynthesis. This is Elongation factor 1-alpha from Cenarchaeum symbiosum (strain A).